Here is a 446-residue protein sequence, read N- to C-terminus: Na(+)-translocating NADH-quinone reductase subunit A (446 aa).

It belongs to the NqrA family. In terms of assembly, composed of six subunits; NqrA, NqrB, NqrC, NqrD, NqrE and NqrF.

It catalyses the reaction a ubiquinone + n Na(+)(in) + NADH + H(+) = a ubiquinol + n Na(+)(out) + NAD(+). In terms of biological role, NQR complex catalyzes the reduction of ubiquinone-1 to ubiquinol by two successive reactions, coupled with the transport of Na(+) ions from the cytoplasm to the periplasm. NqrA to NqrE are probably involved in the second step, the conversion of ubisemiquinone to ubiquinol. This chain is Na(+)-translocating NADH-quinone reductase subunit A, found in Aliivibrio salmonicida (strain LFI1238) (Vibrio salmonicida (strain LFI1238)).